The following is a 172-amino-acid chain: S-ribosylhomocysteine lyase (172 aa).

Fe cation-binding residues include H54, H58, and C128.

Belongs to the LuxS family. Homodimer. The cofactor is Fe cation.

It carries out the reaction S-(5-deoxy-D-ribos-5-yl)-L-homocysteine = (S)-4,5-dihydroxypentane-2,3-dione + L-homocysteine. In terms of biological role, involved in the synthesis of autoinducer 2 (AI-2) which is secreted by bacteria and is used to communicate both the cell density and the metabolic potential of the environment. The regulation of gene expression in response to changes in cell density is called quorum sensing. Catalyzes the transformation of S-ribosylhomocysteine (RHC) to homocysteine (HC) and 4,5-dihydroxy-2,3-pentadione (DPD). The polypeptide is S-ribosylhomocysteine lyase (Vibrio alginolyticus).